Reading from the N-terminus, the 473-residue chain is Myocyte-specific enhancer factor 2C (473 aa).

Residues 1 to 61 form the MADS-box domain; the sequence is MGRKKIQITR…NKLFQYASTD (61 aa). Lys4 is subject to N6-acetyllysine. A DNA-binding region (mef2-type) is located at residues 58 to 86; that stretch reads ASTDMDKVLLKYTEYNEPHESRTNSDIVE. Ser59 bears the Phosphoserine; by CK2 mark. Residues 91–116 are disordered; sequence KGLNGCDSPDPDADDSVGHSPESEDK. A phosphoserine mark is found at Ser98, Ser106, and Ser110. Residues Lys116 and Lys119 each carry the N6-acetyllysine modification. A disordered region spans residues 180-206; that stretch reads NSMSPGVTHRPPSAGNTGGLMGGDLTS. Phosphoserine occurs at positions 222 and 228. An N6-acetyllysine mark is found at Lys234 and Lys239. Position 240 is a phosphoserine (Ser240). Residues Lys252 and Lys264 each carry the N6-acetyllysine modification. The interval 271-278 is beta domain; the sequence is SEDVDLLL. Residues Thr293 and Thr300 each carry the phosphothreonine; by MAPK14 modification. The transcription repressor stretch occupies residues 368–399; the sequence is ACTSTHLSQSSNLSLPSTQSLNIKSEPVSPPR. Polar residues predominate over residues 375–390; the sequence is SQSSNLSLPSTQSLNI. Positions 375–473 are disordered; it reads SQSSNLSLPS…RMRLSEGWAT (99 aa). Residue Lys391 forms a Glycyl lysine isopeptide (Lys-Gly) (interchain with G-Cter in SUMO) linkage. Ser396 carries the phosphoserine; by CDK5 modification. At Ser419 the chain carries Phosphoserine; by MAPK7. The span at 419-432 shows a compositional bias: low complexity; sequence SPVDSLSSCSSSYD. Over residues 433–443 the composition is skewed to basic and acidic residues; the sequence is GSDREDHRNEF. Residue Ser445 is modified to Phosphoserine.

Belongs to the MEF2 family. Forms a complex with class II HDACs in undifferentiating cells. On myogenic differentiation, HDACs are released into the cytoplasm allowing MEF2s to interact with other proteins for activation. Interacts with EP300 in differentiating cells; the interaction acetylates MEF2C leading to increased DNA binding and activation. Interacts with HDAC7 and CARM1. Interacts with HDAC4 and HDAC9; the interaction with HDACs represses transcriptional activity. Interacts with LPIN1. Interacts with MYOCD. Interacts with AKAP13. Interacts with FOXK1; the interaction inhibits MEF2C transactivation activity. Interacts (via N-terminus) with HABP4; this interaction decreases DNA-binding activity of MEF2C in myocardial cells in response to mechanical stress. Interacts with JPH2; interaction specifically takes place with the Junctophilin-2 N-terminal fragment cleavage product of JPH2. Interacts (via MADS box) with SOX18. Interacts with PHF7; the interaction promotes MEF2C binding to its transcription targets. In terms of processing, phosphorylated on Ser-59; which enhances DNA binding activity. Phosphorylated on Ser-396; which is required for Lys-391 sumoylation and inhibits transcriptional activity. Post-translationally, acetylated by p300 on several sites in diffentiating myocytes. Acetylation on Lys-4 increases DNA binding and transactivation. Sumoylated on Lys-391 with SUMO2 but not SUMO1; which represses transcriptional activity. In terms of processing, proteolytically cleaved in cerebellar granule neurons on several sites by caspase 3 and caspase 7 following neurotoxicity. Preferentially cleaves the CDK5-mediated hyperphosphorylated form which leads to neuron apoptosis and transcriptional inactivation. In terms of tissue distribution, expressed in the heart. Expressed in cardiac myocytes (at protein level).

It is found in the nucleus. The protein localises to the cytoplasm. It localises to the sarcoplasm. Transcription activator which binds specifically to the MEF2 element present in the regulatory regions of many muscle-specific genes. Controls cardiac morphogenesis and myogenesis, and is also involved in vascular development. Enhances transcriptional activation mediated by SOX18. Plays an essential role in hippocampal-dependent learning and memory by suppressing the number of excitatory synapses and thus regulating basal and evoked synaptic transmission. Crucial for normal neuronal development, distribution, and electrical activity in the neocortex. Necessary for proper development of megakaryocytes and platelets and for bone marrow B-lymphopoiesis. Required for B-cell survival and proliferation in response to BCR stimulation, efficient IgG1 antibody responses to T-cell-dependent antigens and for normal induction of germinal center B-cells. May also be involved in neurogenesis and in the development of cortical architecture. The protein is Myocyte-specific enhancer factor 2C of Rattus norvegicus (Rat).